The sequence spans 691 residues: DNA ligase (691 aa).

NAD(+) is bound by residues 41-45 (DAEYD), 90-91 (SL), and glutamate 130. Lysine 132 acts as the N6-AMP-lysine intermediate in catalysis. NAD(+) contacts are provided by arginine 153, glutamate 190, lysine 307, and lysine 331. Cysteine 425, cysteine 428, cysteine 443, and cysteine 449 together coordinate Zn(2+). Positions 610–691 (APQGVLAGKT…LHQLLEGNTP (82 aa)) constitute a BRCT domain.

It belongs to the NAD-dependent DNA ligase family. LigA subfamily. It depends on Mg(2+) as a cofactor. Mn(2+) is required as a cofactor.

It catalyses the reaction NAD(+) + (deoxyribonucleotide)n-3'-hydroxyl + 5'-phospho-(deoxyribonucleotide)m = (deoxyribonucleotide)n+m + AMP + beta-nicotinamide D-nucleotide.. Its function is as follows. DNA ligase that catalyzes the formation of phosphodiester linkages between 5'-phosphoryl and 3'-hydroxyl groups in double-stranded DNA using NAD as a coenzyme and as the energy source for the reaction. It is essential for DNA replication and repair of damaged DNA. This is DNA ligase from Burkholderia lata (strain ATCC 17760 / DSM 23089 / LMG 22485 / NCIMB 9086 / R18194 / 383).